A 416-amino-acid chain; its full sequence is Lysosome-associated membrane glycoprotein 3 (416 aa).

The first 27 residues, 1 to 27, serve as a signal peptide directing secretion; sequence MPRQLSAAAALFASLAVILHDGSQMRA. Over 28–381 the chain is Lumenal; the sequence is KAFPETRDYS…NVDECSSDYT (354 aa). N-linked (GlcNAc...) asparagine glycans are attached at residues N112, N158, N164, N200, N232, N266, and N291. 2 disordered regions span residues 136 to 167 and 179 to 219; these read PTIT…NQTT and STTG…LAPQ. Residues 143–160 are compositionally biased toward low complexity; it reads HTTGTSSSTVSHTTGNTT. Residues 188–208 are compositionally biased toward low complexity; it reads PTHAPGTTAAAHNTTRTAAPA. An intrachain disulfide couples C237 to C274. The cysteines at positions 339 and 376 are disulfide-linked. The helical transmembrane segment at 382-402 threads the bilayer; sequence IVLPVIGAIVVGLCLMGMGVY. The Cytoplasmic portion of the chain corresponds to 403 to 416; that stretch reads KIRLRCQSSGYQRI.

This sequence belongs to the LAMP family. Monomer. Interacts with FURIN. As to quaternary structure, (Microbial infection) Interacts with mumps virus protein F; this interaction promotes protein F cleavage by FURIN. Detected in tonsil interdigitating dendritic cells, in spleen, lymph node, Peyer's patches in the small instestine, in thymus medulla and in B-cells (at protein level). Expressed in lymphoid organs and dendritic cells. Expressed in lung. Up-regulated in carcinomas of the esophagus, colon, rectum, ureter, stomach, breast, fallopian tube, thyroid and parotid tissues.

Its subcellular location is the cell surface. It is found in the lysosome membrane. The protein resides in the cytoplasmic vesicle membrane. The protein localises to the early endosome membrane. In terms of biological role, lysosomal membrane glycoprotein which plays a role in the unfolded protein response (UPR) that contributes to protein degradation and cell survival during proteasomal dysfunction. Plays a role in the process of fusion of the lysosome with the autophagosome, thereby modulating the autophagic process. Promotes hepatocellular lipogenesis through activation of the PI3K/Akt pathway. May also play a role in dendritic cell function and in adaptive immunity. Its function is as follows. (Microbial infection) Plays a positive role in post-entry steps of influenza A virus replication, either virus uncoating, cytosolic transport, or nuclear import of viral components, and promotes nuclear accumulation of influenza nucleoprotein/NP at early stages of viral infection. Functionally, (Microbial infection) Supports the FURIN-mediated cleavage of mumps virus fusion protein F by interacting with both FURIN and the unprocessed form but not the processed form of the viral protein F. (Microbial infection) Promotes the intracellular proliferation of Salmonella typhimuium. The polypeptide is Lysosome-associated membrane glycoprotein 3 (LAMP3) (Homo sapiens (Human)).